We begin with the raw amino-acid sequence, 1120 residues long: Transcription-repair-coupling factor (1120 aa).

Residues 591 to 756 (DLTNGMLMDR…MTGLKELSII (166 aa)) form the Helicase ATP-binding domain. Position 604–611 (604–611 (GDVGFGKT)) interacts with ATP. A DEEQ box motif is present at residues 709-712 (DEEQ). Positions 777–933 (IIRDALLREH…TIASHDADLR (157 aa)) constitute a Helicase C-terminal domain.

In the N-terminal section; belongs to the UvrB family. It in the C-terminal section; belongs to the helicase family. RecG subfamily.

The protein resides in the cytoplasm. Its function is as follows. Couples transcription and DNA repair by recognizing RNA polymerase (RNAP) stalled at DNA lesions. Mediates ATP-dependent release of RNAP and its truncated transcript from the DNA, and recruitment of nucleotide excision repair machinery to the damaged site. The sequence is that of Transcription-repair-coupling factor from Rickettsia prowazekii (strain Madrid E).